A 454-amino-acid polypeptide reads, in one-letter code: N-lysine methyltransferase setd6 (454 aa).

One can recognise an SET domain in the interval 38–265; it reads PKVYISTEGT…AGQELFNTYG (228 aa).

Belongs to the class V-like SAM-binding methyltransferase superfamily. Histone-lysine methyltransferase family. SETD6 subfamily.

It is found in the nucleus. In terms of biological role, protein-lysine N-methyltransferase. The sequence is that of N-lysine methyltransferase setd6 (setd6) from Xenopus tropicalis (Western clawed frog).